Here is a 287-residue protein sequence, read N- to C-terminus: 4-hydroxybenzoate octaprenyltransferase (287 aa).

Helical transmembrane passes span 22–42 (IGTL…AQGF), 45–65 (LGVL…GCVI), 91–111 (TSTE…LLVL), 114–134 (NSLT…YPFM), 139–159 (QLPQ…AFAA), 161–181 (ANAL…WTIA), 212–232 (IIIA…GWLE), 236–256 (WIYF…QLQI), and 267–287 (AFLD…LGYL).

It belongs to the UbiA prenyltransferase family. It depends on Mg(2+) as a cofactor.

The protein resides in the cell inner membrane. The catalysed reaction is all-trans-octaprenyl diphosphate + 4-hydroxybenzoate = 4-hydroxy-3-(all-trans-octaprenyl)benzoate + diphosphate. It participates in cofactor biosynthesis; ubiquinone biosynthesis. Its function is as follows. Catalyzes the prenylation of para-hydroxybenzoate (PHB) with an all-trans polyprenyl group. Mediates the second step in the final reaction sequence of ubiquinone-8 (UQ-8) biosynthesis, which is the condensation of the polyisoprenoid side chain with PHB, generating the first membrane-bound Q intermediate 3-octaprenyl-4-hydroxybenzoate. The sequence is that of 4-hydroxybenzoate octaprenyltransferase from Psychromonas ingrahamii (strain DSM 17664 / CCUG 51855 / 37).